The primary structure comprises 155 residues: MATVTSESEFQHMLRVCNTNLDGRRKVPYALTGIKGCGRRYAYLVCKRAGIDVNKRAGLMTPAEIEKIVDILNNPLNYKIPVWFLNRQKDNKDGKDSQLIANAVETRLREDIEALKKMRAHRGLRHYWGLRVRGQHTKTTGRRGRTVGVSRTKGA.

A compositionally biased stretch (basic residues) spans 135-145; the sequence is QHTKTTGRRGR. Positions 135 to 155 are disordered; that stretch reads QHTKTTGRRGRTVGVSRTKGA. Low complexity predominate over residues 146–155; that stretch reads TVGVSRTKGA.

It belongs to the universal ribosomal protein uS13 family. Component of the small ribosomal subunit.

It localises to the cytoplasm. Functionally, component of the small ribosomal subunit. The ribosome is a large ribonucleoprotein complex responsible for the synthesis of proteins in the cell. In Entamoeba histolytica (strain ATCC 30459 / HM-1:IMSS / ABRM), this protein is Small ribosomal subunit protein uS13 (RPS18).